A 610-amino-acid chain; its full sequence is UvrABC system protein C (610 aa).

Residues 12 to 91 (TSPGVYLYKN…IKQKKPRFNI (80 aa)) form the GIY-YIG domain. In terms of domain architecture, UVR spans 202–237 (SDLKQSLTARMNKAAEGMQFELAAKYRDLITTVEDL).

It belongs to the UvrC family. Interacts with UvrB in an incision complex.

The protein localises to the cytoplasm. The UvrABC repair system catalyzes the recognition and processing of DNA lesions. UvrC both incises the 5' and 3' sides of the lesion. The N-terminal half is responsible for the 3' incision and the C-terminal half is responsible for the 5' incision. The chain is UvrABC system protein C from Koribacter versatilis (strain Ellin345).